Consider the following 90-residue polypeptide: uncharacterized protein (90 aa).

A run of 3 helical transmembrane segments spans residues 5–27 (FDIL…IIYI), 40–62 (IYLS…TFVA), and 67–89 (MSVV…YSIV).

The protein resides in the cell membrane. This is an uncharacterized protein from Archaeoglobus fulgidus (strain ATCC 49558 / DSM 4304 / JCM 9628 / NBRC 100126 / VC-16).